A 612-amino-acid polypeptide reads, in one-letter code: Zinc metalloproteinase-disintegrin-like berythractivase (612 aa).

Residues 1 to 20 (MIQVLLVIICLEAFPYQGSS) form the signal peptide. Positions 21 to 187 (IILESGNVND…EPIKKASLLN (167 aa)) are excised as a propeptide. Residues 200–396 (KYVEFVVVLD…NRPQCLLNKP (197 aa)) form the Peptidase M12B domain. Glutamate 203 provides a ligand contact to Ca(2+). N-linked (GlcNAc...) asparagine glycosylation is present at asparagine 260. A Ca(2+)-binding site is contributed by aspartate 287. 3 disulfides stabilise this stretch: cysteine 311–cysteine 391, cysteine 351–cysteine 375, and cysteine 353–cysteine 358. Zn(2+) is bound at residue histidine 336. Glutamate 337 is an active-site residue. Zn(2+) is bound by residues histidine 340 and histidine 346. Residue asparagine 348 is glycosylated (N-linked (GlcNAc...) asparagine). Asparagine 374 is a glycosylation site (N-linked (GlcNAc...) asparagine). Positions 391, 394, 406, 409, 411, 413, 416, and 419 each coordinate Ca(2+). Residues 404 to 490 (PPVCGNELLE…DCPMDDFQRN (87 aa)) form the Disintegrin domain. 14 disulfide bridges follow: cysteine 407–cysteine 436, cysteine 418–cysteine 431, cysteine 420–cysteine 426, cysteine 430–cysteine 453, cysteine 444–cysteine 450, cysteine 449–cysteine 475, cysteine 462–cysteine 482, cysteine 469–cysteine 501, cysteine 494–cysteine 506, cysteine 513–cysteine 563, cysteine 528–cysteine 574, cysteine 541–cysteine 551, cysteine 558–cysteine 600, and cysteine 594–cysteine 605. Asparagine 432 carries N-linked (GlcNAc...) asparagine glycosylation. The D/ECD-tripeptide signature appears at 468–470 (DCD). Ca(2+) contacts are provided by aspartate 470, leucine 471, glutamate 473, and aspartate 485.

It belongs to the venom metalloproteinase (M12B) family. P-III subfamily. P-IIIa sub-subfamily. Monomer. Zn(2+) serves as cofactor. In terms of processing, highly glycosylated. In terms of tissue distribution, expressed by the venom gland.

Its subcellular location is the secreted. Inhibited by EDTA and o-phenanthroline. Not inhibited by PMSF, benzamidine, irreversible serine-proteinase inhibitors and cysteine proteinase inhibitor E-64. Its function is as follows. Potent activator of prothrombin (F2). Does not elicit any hemorrhagic response. Barely inhibits collagen-induced platelet aggregation. Binds neither collagen, nor the jararhagin monoclonal antibody MAJar3. Hydrolyzes the Aalpha-chain of fibrin and fibrinogen, without affecting the Bbeta- and gamma-chains. Is capable of triggering endothelial pro-inflammatory and procoagulant cell responses, but fails to trigger apoptosis. Induces von Willebrand factor release, and the expression of both ICAM1 and E-selectin (SELE) (without increase in VCAM1) in endothelial cells (HUVEC). Is also able to up-regulate the synthesis of the coagulation factor TF (F3). Enhances nitric oxide (NO) generation, prostacyclin production and interleukin-8 release. The chain is Zinc metalloproteinase-disintegrin-like berythractivase from Bothrops erythromelas (Caatinga lance head).